The following is a 1412-amino-acid chain: ABC transporter C family member 3 (1412 aa).

The segment at 1-34 is disordered; that stretch reads MELEEVGVEANQPNNDQGSKKQNKNKDKKVKKEK. A compositionally biased stretch (basic residues) spans 21-34; that stretch reads KQNKNKDKKVKKEK. 6 helical membrane-spanning segments follow: residues 115–135, 161–181, 236–256, 261–281, 346–366, and 379–399; these read FGLY…SQFV, MGYY…VCLY, VFQL…CLAL, IGWP…FNGI, AMLI…VFSS, and IFAA…LPII. Positions 119-405 constitute an ABC transmembrane type-1 1 domain; sequence FVLSWFFYAI…LPIIVALGIQ (287 aa). Residues 439-662 enclose the ABC transporter 1 domain; the sequence is IRDATLTWNQ…QKEFSGLLQA (224 aa). 474-481 contacts ATP; it reads GSVGSGKS. 5 helical membrane passes run 724–744, 787–807, 854–874, 875–895, and 967–987; these read WKYI…FFLM, IYIG…FLFF, NLMA…VATL, IIIS…CIIF, and WLGL…CLFI. In terms of domain architecture, ABC transmembrane type-1 2 spans 735-1025; it reads FLMAFIFFLM…ATLQAADTET (291 aa). The ABC transporter 2 domain maps to 1062 to 1296; the sequence is ITFDNLVMRY…PAGLLNWLVE (235 aa). 1096–1103 is a binding site for ATP; that stretch reads GRTGAGKS. The tract at residues 1316-1412 is disordered; it reads GVNIDQITPP…DNDNSEAGDN (97 aa). Residues 1342-1351 are compositionally biased toward polar residues; that stretch reads NINSPPQQSL. Low complexity predominate over residues 1367-1397; that stretch reads DNNNNNNNNNNNNNNNNNNNNNNNNNNNNND. Over residues 1398–1412 the composition is skewed to acidic residues; that stretch reads NDNDNDNDNSEAGDN.

The protein belongs to the ABC transporter superfamily. ABCC family. Conjugate transporter (TC 3.A.1.208) subfamily.

The protein localises to the membrane. The sequence is that of ABC transporter C family member 3 (abcC3) from Dictyostelium discoideum (Social amoeba).